Here is a 331-residue protein sequence, read N- to C-terminus: Beta-ketoacyl-[acyl-carrier-protein] synthase III (331 aa).

Catalysis depends on residues Cys-115 and His-255. The tract at residues 256-260 is ACP-binding; sequence QANFR. Residue Asn-285 is part of the active site.

Belongs to the thiolase-like superfamily. FabH family. As to quaternary structure, homodimer.

It is found in the cytoplasm. The enzyme catalyses malonyl-[ACP] + acetyl-CoA + H(+) = 3-oxobutanoyl-[ACP] + CO2 + CoA. Its pathway is lipid metabolism; fatty acid biosynthesis. Its function is as follows. Catalyzes the condensation reaction of fatty acid synthesis by the addition to an acyl acceptor of two carbons from malonyl-ACP. Catalyzes the first condensation reaction which initiates fatty acid synthesis and may therefore play a role in governing the total rate of fatty acid production. Possesses both acetoacetyl-ACP synthase and acetyl transacylase activities. Its substrate specificity determines the biosynthesis of branched-chain and/or straight-chain of fatty acids. The protein is Beta-ketoacyl-[acyl-carrier-protein] synthase III of Helicobacter pylori (strain J99 / ATCC 700824) (Campylobacter pylori J99).